Here is a 408-residue protein sequence, read N- to C-terminus: Peptidase T (408 aa).

His78 serves as a coordination point for Zn(2+). The active site involves Asp80. Asp140 serves as a coordination point for Zn(2+). Glu173 serves as the catalytic Proton acceptor. Positions 174, 196, and 379 each coordinate Zn(2+).

It belongs to the peptidase M20B family. Zn(2+) is required as a cofactor.

The protein localises to the cytoplasm. It carries out the reaction Release of the N-terminal residue from a tripeptide.. Cleaves the N-terminal amino acid of tripeptides. The polypeptide is Peptidase T (Escherichia coli (strain UTI89 / UPEC)).